We begin with the raw amino-acid sequence, 552 residues long: Capsid protein precursor (552 aa).

Residues 1–41 are disordered; sequence MKQNDTKKTTQRRNSKKYSSKTNRGTKRAPRDQEVGTGAQE. The span at 9–28 shows a compositional bias: basic residues; the sequence is TTQRRNSKKYSSKTNRGTKR.

As to quaternary structure, homodimer. The 7 kDa polypeptide is acetylated. In terms of processing, autocatalytic proteolysis releases a post-translationally modified peptide that remains associated with nucleic acid within the virion. This peptide is observed only when nucleic acid is packaged in the capsid.

It is found in the virion. The capsid protein self-assembles to form an icosahedral capsid with a T=2 symmetry made of 120 subunits. This is Capsid protein precursor (Segment-1) from Human picobirnavirus (strain Human/Thailand/Hy005102/-) (PBV).